The chain runs to 277 residues: Caspase-3 (277 aa).

Position 1 is an N-acetylmethionine (Met1). Propeptides lie at residues 1 to 9 (MENNETSVD) and 10 to 28 (SKSI…KSMD). At Lys11 the chain carries N6-acetyllysine. Position 26 is a phosphoserine (Ser26). Catalysis depends on residues His121 and Cys163. S-nitrosocysteine; in inhibited form is present on Cys163.

This sequence belongs to the peptidase C14A family. As to quaternary structure, heterotetramer that consists of two anti-parallel arranged heterodimers, each one formed by a 17 kDa (p17) and a 12 kDa (p12) subunit. Interacts with BIRC6/bruce. Cleavage by granzyme B, caspase-6, caspase-8 and caspase-10 generates the two active subunits. Additional processing of the propeptides is likely due to the autocatalytic activity of the activated protease. Active heterodimers between the small subunit of caspase-7 protease and the large subunit of caspase-3 also occur and vice versa. Post-translationally, S-nitrosylated on its catalytic site cysteine in unstimulated cell lines and denitrosylated upon activation of the Fas apoptotic pathway, associated with an increase in intracellular caspase activity. Fas therefore activates caspase-3 not only by inducing the cleavage of the caspase zymogen to its active subunits, but also by stimulating the denitrosylation of its active site thiol. In terms of processing, ubiquitinated by BIRC6; this activity is inhibited by DIABLO/SMAC.

It localises to the cytoplasm. The enzyme catalyses Strict requirement for an Asp residue at positions P1 and P4. It has a preferred cleavage sequence of Asp-Xaa-Xaa-Asp-|- with a hydrophobic amino-acid residue at P2 and a hydrophilic amino-acid residue at P3, although Val or Ala are also accepted at this position.. Its activity is regulated as follows. Inhibited by BIRC6; following inhibition of BIRC6-caspase binding by DIABLO/SMAC, BIRC6 is subjected to caspase cleavage, leading to an increase in active caspases. Its function is as follows. Involved in the activation cascade of caspases responsible for apoptosis execution. At the onset of apoptosis, it proteolytically cleaves poly(ADP-ribose) polymerase PARP1 at a '216-Asp-|-Gly-217' bond. Cleaves and activates sterol regulatory element binding proteins (SREBPs) between the basic helix-loop-helix leucine zipper domain and the membrane attachment domain. Cleaves and activates caspase-6, -7 and -9 (CASP6, CASP7 and CASP9, respectively). Cleaves and inactivates interleukin-18 (IL18). Triggers cell adhesion in sympathetic neurons through RET cleavage. Cleaves IL-1 beta between an Asp and an Ala, releasing the mature cytokine which is involved in a variety of inflammatory processes. Cleaves and inhibits serine/threonine-protein kinase AKT1 in response to oxidative stress. Acts as an inhibitor of type I interferon production during virus-induced apoptosis by mediating cleavage of antiviral proteins CGAS, IRF3 and MAVS, thereby preventing cytokine overproduction. Also involved in pyroptosis by mediating cleavage and activation of gasdermin-E (GSDME). Cleaves XRCC4 and phospholipid scramblase proteins XKR4, XKR8 and XKR9, leading to promote phosphatidylserine exposure on apoptotic cell surface. Cleaves BIRC6 following inhibition of BIRC6-caspase binding by DIABLO/SMAC. This is Caspase-3 (CASP3) from Mesocricetus auratus (Golden hamster).